A 411-amino-acid polypeptide reads, in one-letter code: Probable indole-3-pyruvate monooxygenase YUCCA4 (411 aa).

Position 21–26 (21–26) interacts with FAD; sequence GAGPSG. An NADP(+)-binding site is contributed by 183 to 188; that stretch reads GCGNSG.

This sequence belongs to the FMO family. It depends on FAD as a cofactor. Expressed in leaves, stems, flowers, buds and siliques. Detected in the apical gynoecium and in the developing ovules.

Its subcellular location is the cytoplasm. It is found in the endoplasmic reticulum membrane. The enzyme catalyses indole-3-pyruvate + NADPH + O2 + H(+) = (indol-3-yl)acetate + CO2 + NADP(+) + H2O. Its pathway is plant hormone metabolism; auxin biosynthesis. Involved in auxin biosynthesis. Both isoforms are catalitically active. Involved during embryogenesis and seedling development. Required for the formation of floral organs and vascular tissues. Belongs to the set of redundant YUCCA genes probably responsible for auxin biosynthesis in shoots. This Arabidopsis thaliana (Mouse-ear cress) protein is Probable indole-3-pyruvate monooxygenase YUCCA4 (YUC4).